Here is a 295-residue protein sequence, read N- to C-terminus: Acetylglutamate kinase (295 aa).

Substrate contacts are provided by residues 67–68 (GG), arginine 89, and asparagine 191.

This sequence belongs to the acetylglutamate kinase family. ArgB subfamily.

Its subcellular location is the cytoplasm. It catalyses the reaction N-acetyl-L-glutamate + ATP = N-acetyl-L-glutamyl 5-phosphate + ADP. The protein operates within amino-acid biosynthesis; L-arginine biosynthesis; N(2)-acetyl-L-ornithine from L-glutamate: step 2/4. Its function is as follows. Catalyzes the ATP-dependent phosphorylation of N-acetyl-L-glutamate. This chain is Acetylglutamate kinase, found in Nitrosomonas eutropha (strain DSM 101675 / C91 / Nm57).